A 112-amino-acid chain; its full sequence is cAMP-regulated phosphoprotein 19 (112 aa).

An N-acetylmethionine modification is found at Met1. A compositionally biased stretch (low complexity) spans Met1–Ala11. Positions Met1–Leu49 are disordered. Ser2 is modified (N-acetylserine). Phosphoserine occurs at positions 2 and 23. Basic and acidic residues predominate over residues Glu12–Leu32. 2 positions are modified to phosphoserine; by GWL: Ser62 and Ser104. The segment at Met72 to Gly112 is disordered. Position 104 is a phosphoserine; by PKA (Ser104). At Lys109 the chain carries N6-acetyllysine.

In terms of assembly, interacts (when phosphorylated at Ser-62) with PPP2R2D. Interacts with SNCA. Interacts with PPP2R2A; the interaction is direct and this interaction inhibits PP2A activity. In terms of processing, phosphorylation at Ser-62 by MASTL/GWL during mitosis is essential for interaction with PPP2R2D (PR55-delta) and subsequent inactivation of PP2A. Phosphorylated by PKA. Isoform ARPP-19 is found in all brain regions and also present in non-neuronal tissues. Isoform ARPP-16 is enriched in the caudate nucleus, found in low levels in cerebral cortex.

Its subcellular location is the cytoplasm. Protein phosphatase inhibitor that specifically inhibits protein phosphatase 2A (PP2A) during mitosis. Inhibition of PP2A is enhanced when ARPP19 is phosphorylated. When phosphorylated at Ser-62 during mitosis, specifically interacts with PPP2R2D (PR55-delta) and inhibits its activity, leading to inactivation of PP2A, an essential condition to keep cyclin-B1-CDK1 activity high during M phase. May indirectly enhance GAP-43 expression. The polypeptide is cAMP-regulated phosphoprotein 19 (ARPP19) (Bos taurus (Bovine)).